The primary structure comprises 97 residues: MKTSWIKIFFQGMIHLYRWTISPLLGSPCRFFPSCSEYALVALKKHPLKRSLFLIANRLLKCGPWHIGGIDLVPGTSIEEYLESPDDKNVPPDQETV.

Belongs to the UPF0161 family.

The protein localises to the cell inner membrane. Its function is as follows. Could be involved in insertion of integral membrane proteins into the membrane. The chain is Putative membrane protein insertion efficiency factor from Chlamydia muridarum (strain MoPn / Nigg).